We begin with the raw amino-acid sequence, 417 residues long: NADH-quinone oxidoreductase subunit D (417 aa).

Belongs to the complex I 49 kDa subunit family. In terms of assembly, NDH-1 is composed of 14 different subunits. Subunits NuoB, C, D, E, F, and G constitute the peripheral sector of the complex.

The protein localises to the cell inner membrane. The catalysed reaction is a quinone + NADH + 5 H(+)(in) = a quinol + NAD(+) + 4 H(+)(out). NDH-1 shuttles electrons from NADH, via FMN and iron-sulfur (Fe-S) centers, to quinones in the respiratory chain. The immediate electron acceptor for the enzyme in this species is believed to be ubiquinone. Couples the redox reaction to proton translocation (for every two electrons transferred, four hydrogen ions are translocated across the cytoplasmic membrane), and thus conserves the redox energy in a proton gradient. The chain is NADH-quinone oxidoreductase subunit D from Janthinobacterium sp. (strain Marseille) (Minibacterium massiliensis).